The sequence spans 189 residues: Peptidyl-tRNA hydrolase (189 aa).

Tyr14 provides a ligand contact to tRNA. Catalysis depends on His19, which acts as the Proton acceptor. Phe64, Asn66, and Asn112 together coordinate tRNA.

The protein belongs to the PTH family. In terms of assembly, monomer.

It is found in the cytoplasm. The catalysed reaction is an N-acyl-L-alpha-aminoacyl-tRNA + H2O = an N-acyl-L-amino acid + a tRNA + H(+). In terms of biological role, hydrolyzes ribosome-free peptidyl-tRNAs (with 1 or more amino acids incorporated), which drop off the ribosome during protein synthesis, or as a result of ribosome stalling. Catalyzes the release of premature peptidyl moieties from peptidyl-tRNA molecules trapped in stalled 50S ribosomal subunits, and thus maintains levels of free tRNAs and 50S ribosomes. This chain is Peptidyl-tRNA hydrolase, found in Rhizorhabdus wittichii (strain DSM 6014 / CCUG 31198 / JCM 15750 / NBRC 105917 / EY 4224 / RW1) (Sphingomonas wittichii).